The following is a 118-amino-acid chain: Large ribosomal subunit protein bL12 (118 aa).

Met-1 is subject to N-acetylmethionine; in form MA2.

Belongs to the bacterial ribosomal protein bL12 family. Homodimer. Part of the ribosomal stalk of the 50S ribosomal subunit. Forms a multimeric L10(L12)X complex, where L10 forms an elongated spine to which 2 to 4 L12 dimers bind in a sequential fashion. Binds GTP-bound translation factors. In terms of processing, acetylation of Met-1 converts MA1 to MA2.

Forms part of the ribosomal stalk which helps the ribosome interact with GTP-bound translation factors. Is thus essential for accurate translation. This Micrococcus luteus (Micrococcus lysodeikticus) protein is Large ribosomal subunit protein bL12.